The sequence spans 411 residues: Allantoate amidohydrolase (411 aa).

Residues His81, Asp92, Glu127, and His190 each contribute to the Zn(2+) site. Allantoate is bound by residues Arg215, Asn275, and Arg288. His382 provides a ligand contact to Zn(2+).

The protein belongs to the peptidase M20 family. Homodimer. The cofactor is Zn(2+).

Its subcellular location is the cytoplasm. The catalysed reaction is allantoate + H2O + 2 H(+) = (S)-2-ureidoglycine + NH4(+) + CO2. It functions in the pathway nitrogen metabolism; (S)-allantoin degradation. With respect to regulation, sulfate could be an allosteric effector of the enzyme that is responsible for stabilizing substrate binding. In addition, this anion effector may act as a counterion during enzyme-mediated catalysis. In terms of biological role, involved in the anaerobic nitrogen utilization via the assimilation of allantoin. Catalyzes specifically the hydrolysis of allantoate to yield CO2, NH3 and S-ureidoglycine, which is unstable and readily undergoes a second deamination by S-ureidoglycine aminohydrolase AllE to yield S-ureidoglycolate and NH3. In vivo, the spontaneous release of S-ureidoglycolate and ammonia from S-ureidoglycine appears to be too slow to sustain an efficient flux of nitrogen. This chain is Allantoate amidohydrolase, found in Escherichia coli (strain K12).